The primary structure comprises 362 residues: 3-dehydroquinate synthase (362 aa).

NAD(+) is bound by residues 72 to 77 (DGEQYK), 106 to 110 (GVVGD), 130 to 131 (TT), Lys143, Lys152, and 170 to 173 (CLKT). Residues Glu185, His248, and His265 each contribute to the Zn(2+) site.

The protein belongs to the sugar phosphate cyclases superfamily. Dehydroquinate synthase family. The cofactor is Co(2+). Zn(2+) is required as a cofactor. Requires NAD(+) as cofactor.

It localises to the cytoplasm. The catalysed reaction is 7-phospho-2-dehydro-3-deoxy-D-arabino-heptonate = 3-dehydroquinate + phosphate. Its pathway is metabolic intermediate biosynthesis; chorismate biosynthesis; chorismate from D-erythrose 4-phosphate and phosphoenolpyruvate: step 2/7. Catalyzes the conversion of 3-deoxy-D-arabino-heptulosonate 7-phosphate (DAHP) to dehydroquinate (DHQ). This is 3-dehydroquinate synthase from Aliivibrio fischeri (strain ATCC 700601 / ES114) (Vibrio fischeri).